The following is a 1084-amino-acid chain: Carbamoyl phosphate synthase large chain (1084 aa).

Residues 1 to 401 (MPRRQDVEKV…ALLKAVRSLE (401 aa)) are carboxyphosphate synthetic domain. 12 residues coordinate ATP: R129, R169, G175, G176, R208, L210, E215, G241, V242, H243, Q284, and E298. The region spanning 133–327 (RALMKEIGEP…IAKVAAKIAV (195 aa)) is the ATP-grasp 1 domain. Mg(2+) contacts are provided by Q284, E298, and N300. 3 residues coordinate Mn(2+): Q284, E298, and N300. Positions 402-546 (TGRDGLFHPA…YSCYDEENEA (145 aa)) are oligomerization domain. The tract at residues 547-947 (VSPPGRKAVV…ALYKALLASG (401 aa)) is carbamoyl phosphate synthetic domain. The ATP-grasp 2 domain maps to 672–862 (DQLLSDLSIP…LAKVATQVIA (191 aa)). The ATP site is built by R708, R747, E753, G778, V779, H780, S781, Q821, and E833. Mg(2+)-binding residues include Q821, E833, and N835. Q821, E833, and N835 together coordinate Mn(2+). Residues 948–1084 (VRVPHRGTVL…VGISAVQDWV (137 aa)) form the MGS-like domain. The allosteric domain stretch occupies residues 948–1084 (VRVPHRGTVL…VGISAVQDWV (137 aa)).

It belongs to the CarB family. As to quaternary structure, composed of two chains; the small (or glutamine) chain promotes the hydrolysis of glutamine to ammonia, which is used by the large (or ammonia) chain to synthesize carbamoyl phosphate. Tetramer of heterodimers (alpha,beta)4. Requires Mg(2+) as cofactor. Mn(2+) serves as cofactor.

It carries out the reaction hydrogencarbonate + L-glutamine + 2 ATP + H2O = carbamoyl phosphate + L-glutamate + 2 ADP + phosphate + 2 H(+). The enzyme catalyses hydrogencarbonate + NH4(+) + 2 ATP = carbamoyl phosphate + 2 ADP + phosphate + 2 H(+). The protein operates within amino-acid biosynthesis; L-arginine biosynthesis; carbamoyl phosphate from bicarbonate: step 1/1. It participates in pyrimidine metabolism; UMP biosynthesis via de novo pathway; (S)-dihydroorotate from bicarbonate: step 1/3. In terms of biological role, large subunit of the glutamine-dependent carbamoyl phosphate synthetase (CPSase). CPSase catalyzes the formation of carbamoyl phosphate from the ammonia moiety of glutamine, carbonate, and phosphate donated by ATP, constituting the first step of 2 biosynthetic pathways, one leading to arginine and/or urea and the other to pyrimidine nucleotides. The large subunit (synthetase) binds the substrates ammonia (free or transferred from glutamine from the small subunit), hydrogencarbonate and ATP and carries out an ATP-coupled ligase reaction, activating hydrogencarbonate by forming carboxy phosphate which reacts with ammonia to form carbamoyl phosphate. This is Carbamoyl phosphate synthase large chain from Symbiobacterium thermophilum (strain DSM 24528 / JCM 14929 / IAM 14863 / T).